We begin with the raw amino-acid sequence, 255 residues long: Lactose phosphotransferase system repressor (255 aa).

In terms of domain architecture, HTH deoR-type spans 3-58; it reads KKRRLEKILDMLKIDGTITIKEIIDELDISDMTARRDLDALEADGLLTRTHGGAQL. Residues 20-39 constitute a DNA-binding region (H-T-H motif); sequence ITIKEIIDELDISDMTARRD.

In terms of biological role, repressor of the lactose catabolism operon. Galactose-6-phosphate is the inducer. This is Lactose phosphotransferase system repressor (lacR) from Lactococcus lactis subsp. lactis (Streptococcus lactis).